Reading from the N-terminus, the 250-residue chain is Cell division protein ZapD (250 aa).

The protein belongs to the ZapD family. Interacts with FtsZ.

Its subcellular location is the cytoplasm. Cell division factor that enhances FtsZ-ring assembly. Directly interacts with FtsZ and promotes bundling of FtsZ protofilaments, with a reduction in FtsZ GTPase activity. In Yersinia enterocolitica serotype O:8 / biotype 1B (strain NCTC 13174 / 8081), this protein is Cell division protein ZapD.